The sequence spans 2813 residues: von Willebrand factor (2813 aa).

The signal sequence occupies residues 1–22 (MIPARFAGVLLALALILPGTLC). Positions 33 to 201 (ARCSLFGSDF…ALSSGEQWCE (169 aa)) constitute a VWFD 1 domain. 2 disulfides stabilise this stretch: C35-C162 and C57-C200. 3 N-linked (GlcNAc...) asparagine glycosylation sites follow: N99, N156, and N211. Residues 295-348 (CPAGMEYRQCVSPCARTCQSLHINEMCQERCVDGCSCPEGQLLDEGLCVESTEC) form the TIL 1 domain. The VWFD 2 domain maps to 386–560 (GECLVTGQSH…NAWKLHGDCQ (175 aa)). 3 disulfide bridges follow: C388-C524, C410-C559, and C432-C440. TIL domains are found at residues 652–707 (CPKG…KAQC) and 776–827 (CPAD…LERC). N-linked (GlcNAc...) asparagine glycosylation is present at N666. Residues 764–787 (SLSCRPPMVKLVCPADNLRAEGLE) form an amino-terminal region. Disulfide bonds link C767-C808, C776-C804, and C810-C821. The E1 stretch occupies residues 788-833 (CTKTCQNYDLECMSMGCVSGCLCPPGMVRHENRCVALERCPCFHQG). A CX region spans residues 826–853 (RCPCFHQGKEYAPGETVKIGCNTCVCQD). Residue N857 is glycosylated (N-linked (GlcNAc...) asparagine). The VWFD 3 domain maps to 865–1032 (ATCSTIGMAH…NSWKVSSQCA (168 aa)). Cystine bridges form between C867-C996, C889-C1031, C898-C993, C914-C921, C1060-C1084, C1071-C1111, C1089-C1091, and C1126-C1130. The TIL 4 domain occupies 1146–1196 (YNSCAPACQVTCQHPEPLACPVQCVEGCHAHCPPGKILDELLQTCVDPEDC). N-linked (GlcNAc...) asparagine; atypical glycosylation is present at N1147. Intrachain disulfides connect C1149-C1169, C1153-C1165, and C1196-C1199. N1231 carries an N-linked (GlcNAc...) asparagine glycan. C1234 and C1237 are disulfide-bonded. O-linked (GalNAc...) threonine glycosylation is found at T1248, T1255, and T1256. O-linked (GalNAc...) serine glycosylation is present at S1263. Cysteines 1272 and 1458 form a disulfide. A VWFA 1; binding site for platelet glycoprotein Ib domain is found at 1277 to 1453 (DLVFLLDGSS…DELEQQRDEI (177 aa)). Residues T1468 and T1477 are each glycosylated (O-linked (GalNAc...) threonine). A glycan (O-linked (GalNAc...) serine) is linked at S1486. T1487 carries O-linked (GalNAc...) threonine glycosylation. The VWFA 2 domain maps to 1498-1665 (DVAFVLEGSD…TLPREAPDLV (168 aa)). Residue N1515 is glycosylated (N-linked (GlcNAc...) (complex) asparagine). N1574 carries N-linked (GlcNAc...) asparagine glycosylation. An intrachain disulfide couples C1669 to C1670. Residue T1679 is glycosylated (O-linked (GalNAc...) threonine). Intrachain disulfides connect C1686/C1872, C1879/C1904, C1899/C1940, C1927/C2088, C1950/C2085, C1972/C2123, and C1993/C2001. Positions 1691-1871 (DVILLLDGSS…TLGNSFLHKL (181 aa)) constitute a VWFA 3; main binding site for collagens type I and III domain. The VWFD 4 domain maps to 1948 to 2124 (CVCTGSSTRH…TVQRPGQTCQ (177 aa)). Residues 2216–2261 (CPRHCDGNVSSCGDHPSEGCFCPPDKVMLEGSCVPEEACTQCIGED) are E2. N2223 and N2290 each carry an N-linked (GlcNAc...) asparagine glycan. Residues 2255 to 2328 (TQCIGEDGVQ…CCPEYECVCD (74 aa)) form the VWFC 1 domain. O-linked (GalNAc...) threonine glycosylation is present at T2298. N2357 and N2400 each carry an N-linked (GlcNAc...) asparagine glycan. The 67-residue stretch at 2429-2495 (KVCVHRSTIY…HEGECCGRCL (67 aa)) folds into the VWFC 2 domain. The Cell attachment site motif lies at 2507-2509 (RGD). 2 N-linked (GlcNAc...) asparagine glycosylation sites follow: N2546 and N2585. In terms of domain architecture, VWFC 3 spans 2580-2645 (EACMLNGTVI…NTGECCGRCL (66 aa)). 4 disulfides stabilise this stretch: C2724–C2774, C2739–C2788, C2750–C2804, and C2754–C2806. The 89-residue stretch at 2724-2812 (CNDITARLQY…ECKCSPRKCS (89 aa)) folds into the CTCK domain. N-linked (GlcNAc...) asparagine glycosylation is present at N2790.

Multimeric. Interacts with F8. In terms of processing, all cysteine residues are involved in intrachain or interchain disulfide bonds. Post-translationally, N- and O-glycosylated. As to expression, plasma.

Its subcellular location is the secreted. It localises to the extracellular space. The protein localises to the extracellular matrix. Its function is as follows. Important in the maintenance of hemostasis, it promotes adhesion of platelets to the sites of vascular injury by forming a molecular bridge between sub-endothelial collagen matrix and platelet-surface receptor complex GPIb-IX-V. Also acts as a chaperone for coagulation factor VIII, delivering it to the site of injury, stabilizing its heterodimeric structure and protecting it from premature clearance from plasma. This chain is von Willebrand factor (VWF), found in Homo sapiens (Human).